Here is a 176-residue protein sequence, read N- to C-terminus: MLDREGYRPNVGIILVNTRNEVFWGKRIREHSWQFPQGGIKHGESPEQAMFRELFEEVGLRPEHVKILGRTRGWLRYDVPKHWIKREWRNTYRGQKQIWFLLRLVGRDSDVCLRASTHPEFDAWRWSDYWVPLEAVIEFKRQVYQQALFELSKTLFRTRPCDPPEAYKALAEVREP.

The Nudix hydrolase domain occupies 6-149 (GYRPNVGIIL…KRQVYQQALF (144 aa)). A Nudix box motif is present at residues 38 to 59 (GGIKHGESPEQAMFRELFEEVG).

This sequence belongs to the Nudix hydrolase family. RppH subfamily. A divalent metal cation is required as a cofactor.

Its function is as follows. Accelerates the degradation of transcripts by removing pyrophosphate from the 5'-end of triphosphorylated RNA, leading to a more labile monophosphorylated state that can stimulate subsequent ribonuclease cleavage. The protein is RNA pyrophosphohydrolase of Aromatoleum aromaticum (strain DSM 19018 / LMG 30748 / EbN1) (Azoarcus sp. (strain EbN1)).